Here is an 84-residue protein sequence, read N- to C-terminus: Small ribosomal subunit protein eS27 (84 aa).

The span at methionine 1 to lysine 16 shows a compositional bias: basic and acidic residues. Residues methionine 1–arginine 23 form a disordered region. The segment at cysteine 37–cysteine 59 adopts a C4-type zinc-finger fold.

The protein belongs to the eukaryotic ribosomal protein eS27 family. In terms of assembly, component of the small ribosomal subunit. Part of the small subunit (SSU) processome, composed of more than 70 proteins and the RNA chaperone small nucleolar RNA (snoRNA) U3. The cofactor is Zn(2+).

The protein resides in the cytoplasm. It localises to the nucleus. The protein localises to the nucleolus. Its function is as follows. Component of the small ribosomal subunit. The ribosome is a large ribonucleoprotein complex responsible for the synthesis of proteins in the cell. Required for proper rRNA processing and maturation of 18S rRNAs. Part of the small subunit (SSU) processome, first precursor of the small eukaryotic ribosomal subunit. During the assembly of the SSU processome in the nucleolus, many ribosome biogenesis factors, an RNA chaperone and ribosomal proteins associate with the nascent pre-rRNA and work in concert to generate RNA folding, modifications, rearrangements and cleavage as well as targeted degradation of pre-ribosomal RNA by the RNA exosome. The polypeptide is Small ribosomal subunit protein eS27 (rps27) (Xenopus laevis (African clawed frog)).